Here is a 1390-residue protein sequence, read N- to C-terminus: Contactin (1390 aa).

The N-terminal stretch at 1–18 (MLAKIGLLASILVLNLVG) is a signal peptide. Positions 25–67 (SENLPDPDPQSGQQPQNYQPSYNKDYSPRYNPLYTGQQSADPN) are disordered. Polar residues predominate over residues 58–67 (YTGQQSADPN). 6 consecutive Ig-like C2-type domains span residues 362–463 (PYFV…AHLN), 468–561 (MEFN…LRVT), 576–656 (PKVF…IYIN), 661–745 (PQFT…TSFS), 756–843 (PSFK…ARVI), and 848–939 (IRFI…TSVS). An N-linked (GlcNAc...) asparagine glycan is attached at N369. 4 disulfide bridges follow: C388–C446, C489–C540, C593–C640, and C682–C734. N537, N604, N629, N691, and N774 each carry an N-linked (GlcNAc...) asparagine glycan. 2 cysteine pairs are disulfide-bonded: C779-C827 and C870-C923. N-linked (GlcNAc...) asparagine glycans are attached at residues N912, N986, and N991. Fibronectin type-III domains are found at residues 946-1048 (APGG…TYED), 1053-1151 (APRN…SAED), 1156-1254 (APQK…TYRK), and 1259-1357 (PPSS…MGKT). N-linked (GlcNAc...) asparagine glycosylation is found at N1166, N1171, and N1307. A1362 carries GPI-anchor amidated alanine lipidation. The propeptide at 1363–1390 (NTRHGHNINTALILSTLLLISTFLYTSQ) is removed in mature form.

Belongs to the immunoglobulin superfamily. Contactin family. As to quaternary structure, forms a complex with Nrg and Nrx. Forms a complex composed of septa junction proteins Nrx-IV/Nrx, Tsf2/MTf, Cont and Nrg during late embryogenesis. Post-translationally, N-glycosylated. As to expression, expressed in ectodermally derived epithelial cells from stage 12. All these tissues, such as epidermis, hindgut, foregut, salivary glands and trachea, which contain pleated septate junctions. Expressed by ectodermally derived epithelial cells and along peripheral nerves. Not present in midline glial cells. Expressed in epithelial cells and glial cells of peripheral nerves.

Its subcellular location is the cell membrane. It is found in the cell junction. The protein localises to the septate junction. In terms of biological role, required for organization of septate junctions and paracellular barrier functions. Septate junctions, which are the equivalent of vertebrates tight junctions, are characterized by regular arrays of transverse structures that span the intermembrane space and form a physical barrier to diffusion. The polypeptide is Contactin (Cont) (Drosophila melanogaster (Fruit fly)).